The following is a 127-amino-acid chain: DNA-directed RNA polymerases I, II, and III subunit RPABC2 (127 aa).

A compositionally biased stretch (acidic residues) spans M1–E34. The segment at M1 to T53 is disordered. At S2 the chain carries N-acetylserine. S2 is modified (phosphoserine; by CK2).

This sequence belongs to the archaeal Rpo6/eukaryotic RPB6 RNA polymerase subunit family. Component of the RNA polymerase I (Pol I), RNA polymerase II (Pol II) and RNA polymerase III (Pol III) complexes consisting of at least 13, 12 and 17 subunits, respectively. Pol I complex consists of a ten-subunit catalytic core composed of POLR1A/RPA1, POLR1B/RPA2, POLR1C/RPAC1, POLR1D/RPAC2, POLR1H/RPA12, POLR2E/RPABC1, POLR2F/RPABC2, POLR2H/RPABC3, POLR2K/RPABC4 and POLR2L/RPABC5; a mobile stalk subunit POLR1F/RPA43 protruding from the core and additional subunits homologous to general transcription factors POLR1E/RPA49 and POLR1G/RPA34. Part of Pol I pre-initiation complex (PIC), in which Pol I core assembles with RRN3 and promoter-bound UTBF and SL1/TIF-IB complex. Pol II complex contains a ten-subunit catalytic core composed of POLR2A/RPB1, POLR2B/RPB2, POLR2C/RPB3, POLR2I/RPB9, POLR2J/RPB11, POLR2E/RPABC1, POLR2F/RPABC2, POLR2H/RPABC3, POLR2K/RPABC4 and POLR2L/RPABC5 and a mobile stalk composed of two subunits POLR2D/RPB4 and POLR2G/RPB7. Part of Pol II(G) complex, in which Pol II core associates with an additional subunit POLR2M; unlike conventional Pol II, Pol II(G) functions as a transcriptional repressor. Part of TBP-based Pol II pre-initiation complex (PIC), in which Pol II core assembles with general transcription factors and other specific initiation factors including GTF2E1, GTF2E2, GTF2F1, GTF2F2, TCEA1, ERCC2, ERCC3, GTF2H2, GTF2H3, GTF2H4, GTF2H5, GTF2A1, GTF2A2, GTF2B and TBP; this large multi-subunit PIC complex mediates DNA unwinding and targets Pol II core to the transcription start site where the first phosphodiester bond forms. Pol III complex consists of a ten-subunit catalytic core composed of POLR3A/RPC1, POLR3B/RPC2, POLR1C/RPAC1, POLR1D/RPAC2, POLR3K/RPC10, POLR2E/RPABC1, POLR2F/RPABC2, POLR2H/RPABC3, POLR2K/RPABC4 and POLR2L/RPABC5; a mobile stalk composed of two subunits POLR3H/RPC8 and CRCP/RPC9, protruding from the core and functioning primarily in transcription initiation; and additional subunits homologous to general transcription factors of the RNA polymerase II machinery, POLR3C/RPC3-POLR3F/RPC6-POLR3G/RPC7 heterotrimer required for transcription initiation and POLR3D/RPC4-POLR3E/RPC5 heterodimer involved in both transcription initiation and termination.

It localises to the nucleus. The protein resides in the nucleolus. In terms of biological role, DNA-dependent RNA polymerase catalyzes the transcription of DNA into RNA using the four ribonucleoside triphosphates as substrates. Common component of RNA polymerases I, II, and III which synthesize ribosomal RNA precursors, mRNA precursors and many functional non-coding RNAs, and small RNAs, such as 5S rRNA and tRNAs, respectively. Pol II is the central component of the basal RNA polymerase II transcription machinery. Pols are composed of mobile elements that move relative to each other. In Pol II, POLR2F/RPABC2 is part of the clamp element and together with parts of POLR2A/RPB1 and POLR2B/RPB2 forms a pocket to which the POLR2D/RPB4-POLR2G/RPB7 subcomplex binds. The protein is DNA-directed RNA polymerases I, II, and III subunit RPABC2 of Homo sapiens (Human).